Here is a 460-residue protein sequence, read N- to C-terminus: Sexual development regulator velC (460 aa).

3 disordered regions span residues 67–131 (VGPD…PQAP), 152–216 (YAPR…RPDP), and 422–460 (KKGN…SARQ). A compositionally biased stretch (polar residues) spans 192–207 (PVTTNGRPPDSNSPMV). Residues 239 to 422 (LSDNRFNLQI…KEQGCIISIK (184 aa)) form the Velvet domain. Over residues 423 to 437 (KGNDRSKNTRSHDDS) the composition is skewed to basic and acidic residues. Residues 451–460 (GKRRRRSARQ) show a composition bias toward basic residues.

It belongs to the velvet family. VelC subfamily. Interacts with VE1.

It localises to the nucleus. Velvet-domain-containing protein that acts as a positive regulator of sexual development. Dispensable for regulation of conidial size, hyphal hydrophobicity, fumonisin production, and oxidant resistance. This chain is Sexual development regulator velC, found in Gibberella moniliformis (strain M3125 / FGSC 7600) (Maize ear and stalk rot fungus).